The sequence spans 533 residues: Nuclear receptor corepressor 1 (533 aa).

The span at 1 to 17 (KDKGPPPKSRYEEELRT) shows a compositional bias: basic and acidic residues. Positions 1–21 (KDKGPPPKSRYEEELRTRGKT) are disordered. The short motif at 29–33 (IDVII) is the CORNR box 1 element. Residues 37 to 144 (IASDKDARER…EGMGQVPRTH (108 aa)) form a disordered region. Residues 38–47 (ASDKDARERG) are compositionally biased toward basic and acidic residues. Residues 48–59 (SQSSDSSSSLSS) show a composition bias toward low complexity. 2 positions are modified to phosphoserine: S73 and S77. The tract at residues 130–209 (PSSQAEGMGQ…QSQTVLHPRP (80 aa)) is ID1. Residues 145-148 (RLIT) are required for interaction with RARA in the absence of its ligand. The CORNR box 2 signature appears at 153-157 (ICQII). The span at 165–180 (QVPSQPSTSTFQTSPS) shows a compositional bias: low complexity. A disordered region spans residues 165–254 (QVPSQPSTST…SPPQGPAVHE (90 aa)). Residues 181–204 (ALSSTPVRTKPSSRYSPESQSQTV) are compositionally biased toward polar residues. S196, S214, S230, S245, and S278 each carry phosphoserine. Over residues 218-236 (LVDKSRGSRPGKSPERSHI) the composition is skewed to basic and acidic residues. The tract at residues 306–367 (IFRKLNSSGG…EDIIRKALMG (62 aa)) is ID2. Residues 357 to 361 (LEDII) carry the CORNR box 3 motif. The segment covering 382-399 (HPVGVVPGSASTSVVTSS) has biased composition (low complexity). The disordered stretch occupies residues 382-476 (HPVGVVPGSA…RPSSTGSTQF (95 aa)). Residue T492 is modified to Phosphothreonine. 2 positions are modified to phosphoserine: S529 and S531.

Belongs to the N-CoR nuclear receptor corepressors family. As to quaternary structure, forms a large corepressor complex that contains SIN3A/B and histone deacetylases HDAC1 and HDAC2. This complex associates with the thyroid receptor (TR) and the retinoid acid receptor (RAR) in the absence of ligand. Interacts directly with RARA; the interaction is facilitated with RARA trimethylation. Component of the N-Cor repressor complex, at least composed of CBFA2T3, HEXIM1, NCOR1, NCOR2, HDAC3, TBL1X, TBL1XR1, CORO2A and GPS2. Interacts with ZBTB33; the interaction serves to recruit the N-CoR complex to promoter regions containing methylated CpG dinucleotides. Interacts with TRIM28 and KDM3A. Interacts (via the RD1 domain) with BAZ1A (via its N-terminal); the interaction corepresses a number of NCOR1-regulated genes. Interacts with BCL6, C1D, DACH1, HEXIM1, HDAC7, RORA, RORC, SAP30, SIAH2, SIN3A and SIN3B. May interact with DEAF1. Interacts with RXRA. Interacts with SETD5. Interacts with VDR. Interacts with ZBTB7A. Interacts with AR. Interacts with HDAC3. Post-translationally, ubiquitinated; mediated by SIAH2 and leading to its subsequent proteasomal degradation.

It is found in the nucleus. In terms of biological role, mediates transcriptional repression by certain nuclear receptors. Part of a complex which promotes histone deacetylation and the formation of repressive chromatin structures which may impede the access of basal transcription factors. Participates in the transcriptional repressor activity produced by BCL6. Recruited by ZBTB7A to the androgen response elements/ARE on target genes, negatively regulates androgen receptor signaling and androgen-induced cell proliferation. Mediates the NR1D1-dependent repression and circadian regulation of TSHB expression. The NCOR1-HDAC3 complex regulates the circadian expression of the core clock gene ARTNL/BMAL1 and the genes involved in lipid metabolism in the liver. In Rattus norvegicus (Rat), this protein is Nuclear receptor corepressor 1 (Ncor1).